A 1230-amino-acid chain; its full sequence is ATP-dependent helicase/nuclease subunit A (1230 aa).

A UvrD-like helicase ATP-binding domain is found at T3–Q473. A24–T31 serves as a coordination point for ATP. A UvrD-like helicase C-terminal domain is found at E500–G782.

The protein belongs to the helicase family. AddA subfamily. In terms of assembly, heterodimer of AddA and AddB/RexB. Mg(2+) is required as a cofactor.

It catalyses the reaction Couples ATP hydrolysis with the unwinding of duplex DNA by translocating in the 3'-5' direction.. It carries out the reaction ATP + H2O = ADP + phosphate + H(+). In terms of biological role, the heterodimer acts as both an ATP-dependent DNA helicase and an ATP-dependent, dual-direction single-stranded exonuclease. Recognizes the chi site generating a DNA molecule suitable for the initiation of homologous recombination. The AddA nuclease domain is required for chi fragment generation; this subunit has the helicase and 3' -&gt; 5' nuclease activities. In Leuconostoc mesenteroides subsp. mesenteroides (strain ATCC 8293 / DSM 20343 / BCRC 11652 / CCM 1803 / JCM 6124 / NCDO 523 / NBRC 100496 / NCIMB 8023 / NCTC 12954 / NRRL B-1118 / 37Y), this protein is ATP-dependent helicase/nuclease subunit A.